Here is a 240-residue protein sequence, read N- to C-terminus: tRNA pseudouridine synthase A (240 aa).

Asp-52 functions as the Nucleophile in the catalytic mechanism. Residue Tyr-110 coordinates substrate.

It belongs to the tRNA pseudouridine synthase TruA family. In terms of assembly, homodimer.

The catalysed reaction is uridine(38/39/40) in tRNA = pseudouridine(38/39/40) in tRNA. Functionally, formation of pseudouridine at positions 38, 39 and 40 in the anticodon stem and loop of transfer RNAs. The chain is tRNA pseudouridine synthase A from Solibacter usitatus (strain Ellin6076).